A 248-amino-acid chain; its full sequence is Small ribosomal subunit protein uS2 (248 aa).

It belongs to the universal ribosomal protein uS2 family.

This Thiobacillus denitrificans (strain ATCC 25259 / T1) protein is Small ribosomal subunit protein uS2.